Reading from the N-terminus, the 212-residue chain is Orotate phosphoribosyltransferase (212 aa).

5-phospho-alpha-D-ribose 1-diphosphate-binding positions include arginine 94, lysine 98, histidine 100, and 120–128; that span reads EDLISTGGS. Serine 124 is an orotate binding site.

The protein belongs to the purine/pyrimidine phosphoribosyltransferase family. PyrE subfamily. In terms of assembly, homodimer. Mg(2+) serves as cofactor.

It catalyses the reaction orotidine 5'-phosphate + diphosphate = orotate + 5-phospho-alpha-D-ribose 1-diphosphate. Its pathway is pyrimidine metabolism; UMP biosynthesis via de novo pathway; UMP from orotate: step 1/2. Functionally, catalyzes the transfer of a ribosyl phosphate group from 5-phosphoribose 1-diphosphate to orotate, leading to the formation of orotidine monophosphate (OMP). The sequence is that of Orotate phosphoribosyltransferase from Bacillus pumilus (strain SAFR-032).